A 352-amino-acid chain; its full sequence is MSSKKKTKPVLPPGPVMVDVAGTTLTKDEKRRLRNPLVGGVILFARNFTDRRQLCALTRAIHKARKEPLLIAVDHEGGRVQRFRDDGFTALPPMQELGKLWDRDPLAAMRLATEAGYVLAAELRACGVDLSFTPVLDLDYGVSKVIGNRAFHHDARVVTMLSRALTQGLALAGMAACGKHFPGHGFVGADSHHEIPVDPRPLARILKDDAAPYAWLGDLVMPAVMPAHVIYPKVDAQPAGFSRRWVSEILRERLGYDGVVFSDDLTMEGASVAGDILARAEAALGAGCDMVLVCRPDLADELLDRLQVQHPAASVERIRRLLPRFAAPDWDTLQNDSRYQHARRLQSQIVSG.

Substrate is bound by residues Asp74, Arg82, Arg149, and 179–180 (KH). The Proton donor/acceptor role is filled by His192. The active-site Nucleophile is Asp263.

The protein belongs to the glycosyl hydrolase 3 family. NagZ subfamily.

The protein localises to the cytoplasm. It catalyses the reaction Hydrolysis of terminal non-reducing N-acetyl-D-hexosamine residues in N-acetyl-beta-D-hexosaminides.. The protein operates within cell wall biogenesis; peptidoglycan recycling. Plays a role in peptidoglycan recycling by cleaving the terminal beta-1,4-linked N-acetylglucosamine (GlcNAc) from peptide-linked peptidoglycan fragments, giving rise to free GlcNAc, anhydro-N-acetylmuramic acid and anhydro-N-acetylmuramic acid-linked peptides. In Bordetella pertussis (strain Tohama I / ATCC BAA-589 / NCTC 13251), this protein is Beta-hexosaminidase.